The sequence spans 153 residues: Catabolic 3-dehydroquinase (153 aa).

Y24 functions as the Proton acceptor in the catalytic mechanism. 3 residues coordinate substrate: N75, H81, and D88. The active-site Proton donor is the H101. Substrate contacts are provided by residues 102 to 103 (VS) and R112.

Belongs to the type-II 3-dehydroquinase family. As to quaternary structure, homododecamer. Adopts a ring-like structure, composed of an arrangement of two hexameric rings stacked on top of one another.

It catalyses the reaction 3-dehydroquinate = 3-dehydroshikimate + H2O. It participates in aromatic compound metabolism; 3,4-dihydroxybenzoate biosynthesis; 3,4-dihydroxybenzoate from 3-dehydroquinate: step 1/2. Its function is as follows. Is involved in the catabolism of quinate. Allows the utilization of quinate as carbon source via the beta-ketoadipate pathway. This Aspergillus oryzae (strain ATCC 42149 / RIB 40) (Yellow koji mold) protein is Catabolic 3-dehydroquinase.